The chain runs to 546 residues: Hexose oxidase (546 aa).

Positions 40 to 222 constitute an FAD-binding PCMH-type domain; that stretch reads IGTNIDFVYV…TKYYFKDLPM (183 aa). A cross-link (6-(S-cysteinyl)-8alpha-(pros-histidyl)-FAD (His-Cys)) is located at residues 79–138; the sequence is HCYEDFVFDECVKAIINVTGLVESGYDDDRGYFVSSGDTNWGSFKTLFRDHGRVLPGGSC. N-linked (GlcNAc...) asparagine glycosylation is found at N95 and N358.

It belongs to the oxygen-dependent FAD-linked oxidoreductase family. In terms of assembly, homodimer. Requires FAD as cofactor. In terms of processing, cleaved into 40 kDa and 29 kDa cleavage products, but the 2 polypeptide chains do not separate and seem to be physically linked together. Post-translationally, the FAD cofactor is bound via a bicovalent 6-S-cysteinyl, 8alpha-N1-histidyl FAD linkage.

The catalysed reaction is beta-D-glucose + O2 = D-glucono-1,5-lactone + H2O2. It catalyses the reaction D-galactose + O2 = D-galactono-1,5-lactone + H2O2. It carries out the reaction D-maltose + O2 = D-maltobiono-1,5-lactone + H2O2. The enzyme catalyses D-cellobiose + O2 = D-cellobiono-1,5-lactone + H2O2. The catalysed reaction is beta-lactose + O2 = lactobiono-1,5-lactone + H2O2. Its function is as follows. Catalyzes the selective oxidation of C1 hydroxyl moieties on mono- and disaccharides with concomitant reduction of molecular oxygen to hydrogen peroxide. This results in the formation of the corresponding lactones, which typically undergo spontaneous hydrolysis. Hexose oxidase is able to oxidize a variety of substrates including D-glucose, D-galactose, maltose, cellobiose, and lactose. The polypeptide is Hexose oxidase (HOX) (Chondrus crispus (Carrageen Irish moss)).